The sequence spans 137 residues: Cellular retinoic acid-binding protein 1 (137 aa).

Residues arginine 21 to lysine 31 carry the Nuclear localization signal motif. All-trans-retinoate is bound at residue arginine 132–tyrosine 134.

This sequence belongs to the calycin superfamily. Fatty-acid binding protein (FABP) family.

It is found in the cytoplasm. Its function is as follows. Cytosolic CRABPs may regulate the access of retinoic acid to the nuclear retinoic acid receptors. The chain is Cellular retinoic acid-binding protein 1 (CRABP1) from Pelodiscus sinensis (Chinese softshell turtle).